A 443-amino-acid polypeptide reads, in one-letter code: uncharacterized protein (443 aa).

Catalysis depends on proton acceptor residues H164 and D386.

The protein belongs to the plant acyltransferase family.

This is an uncharacterized protein from Arabidopsis thaliana (Mouse-ear cress).